The following is a 106-amino-acid chain: uncharacterized protein (106 aa).

This sequence belongs to the csb family.

This is an uncharacterized protein from Dictyostelium discoideum (Social amoeba).